An 840-amino-acid chain; its full sequence is Heat shock 70 kDa protein 4 (840 aa).

K53 bears the N6-acetyllysine mark. S76 carries the post-translational modification Phosphoserine. Phosphotyrosine is present on residues Y89 and Y336. A phosphoserine mark is found at S393 and S415. Residue K430 is modified to N6-acetyllysine. Residues 500–575 are disordered; the sequence is VHKSEESEEP…QAKKAKVKTS (76 aa). A compositionally biased stretch (basic and acidic residues) spans 514 to 533; it reads QNAKEEEKMQVDQEEPHTEE. The residue at position 538 (T538) is a Phosphothreonine. Residue S546 is modified to Phosphoserine. Y660 is subject to Phosphotyrosine. S756 bears the Phosphoserine mark. K773 bears the N6-methyllysine mark. The disordered stretch occupies residues 781–840; the sequence is PIISKPKPKVEPPKEEPKHAEQNGPVDGQGDNPGTQAAEHGADTAVPSDGDKKLPEMDID. Composition is skewed to basic and acidic residues over residues 788 to 801 and 829 to 840; these read PKVE…KHAE and DGDKKLPEMDID.

It belongs to the heat shock protein 70 family. Interacts with TJP1/ZO-1. Ubiquitous. Highly expressed in testis.

The protein localises to the cytoplasm. The polypeptide is Heat shock 70 kDa protein 4 (Hspa4) (Rattus norvegicus (Rat)).